A 238-amino-acid polypeptide reads, in one-letter code: Purine nucleoside phosphorylase DeoD-type (238 aa).

Residue histidine 4 participates in a purine D-ribonucleoside binding. Phosphate contacts are provided by residues glycine 20, arginine 24, arginine 43, and 87 to 90; that span reads RVGS. Residues 179–181 and 203–204 contribute to the a purine D-ribonucleoside site; these read EME and SD. The Proton donor role is filled by aspartate 204.

It belongs to the PNP/UDP phosphorylase family. Homohexamer; trimer of homodimers.

It catalyses the reaction a purine D-ribonucleoside + phosphate = a purine nucleobase + alpha-D-ribose 1-phosphate. It carries out the reaction a purine 2'-deoxy-D-ribonucleoside + phosphate = a purine nucleobase + 2-deoxy-alpha-D-ribose 1-phosphate. Catalyzes the reversible phosphorolytic breakdown of the N-glycosidic bond in the beta-(deoxy)ribonucleoside molecules, with the formation of the corresponding free purine bases and pentose-1-phosphate. This Haemophilus influenzae (strain 86-028NP) protein is Purine nucleoside phosphorylase DeoD-type.